A 496-amino-acid polypeptide reads, in one-letter code: Probable CtpA-like serine protease (496 aa).

The segment covering 1 to 16 has biased composition (basic and acidic residues); the sequence is MDDKQHTSSSDDERAE. The segment at 1-27 is disordered; sequence MDDKQHTSSSDDERAEIATSNQDQETN. Residues 18–27 are compositionally biased toward polar residues; that stretch reads ATSNQDQETN. The helical transmembrane segment at 39 to 59 threads the bilayer; it reads FISILIGTILITAVITVVAYI. The region spanning 124-206 is the PDZ domain; sequence TKSFNEGVSG…TEVTLTVQRG (83 aa). Residues S329, D340, and K354 each act as charge relay system in the active site.

This sequence belongs to the peptidase S41A family.

It localises to the cell membrane. This is Probable CtpA-like serine protease from Staphylococcus aureus (strain COL).